The chain runs to 511 residues: UDP-N-acetylmuramoyl-L-alanyl-D-glutamate--2,6-diaminopimelate ligase (511 aa).

Serine 30 serves as a coordination point for UDP-N-acetyl-alpha-D-muramoyl-L-alanyl-D-glutamate. Residue 110 to 116 (GTNGKTT) coordinates ATP. UDP-N-acetyl-alpha-D-muramoyl-L-alanyl-D-glutamate contacts are provided by residues 152–153 (TT), serine 179, glutamine 185, and arginine 187. The residue at position 219 (lysine 219) is an N6-carboxylysine. Meso-2,6-diaminopimelate is bound by residues arginine 385, 409-412 (DNPR), glycine 476, and glutamate 480. The short motif at 409–412 (DNPR) is the Meso-diaminopimelate recognition motif element.

Belongs to the MurCDEF family. MurE subfamily. The cofactor is Mg(2+). In terms of processing, carboxylation is probably crucial for Mg(2+) binding and, consequently, for the gamma-phosphate positioning of ATP.

The protein resides in the cytoplasm. The catalysed reaction is UDP-N-acetyl-alpha-D-muramoyl-L-alanyl-D-glutamate + meso-2,6-diaminopimelate + ATP = UDP-N-acetyl-alpha-D-muramoyl-L-alanyl-gamma-D-glutamyl-meso-2,6-diaminopimelate + ADP + phosphate + H(+). The protein operates within cell wall biogenesis; peptidoglycan biosynthesis. Its function is as follows. Catalyzes the addition of meso-diaminopimelic acid to the nucleotide precursor UDP-N-acetylmuramoyl-L-alanyl-D-glutamate (UMAG) in the biosynthesis of bacterial cell-wall peptidoglycan. The protein is UDP-N-acetylmuramoyl-L-alanyl-D-glutamate--2,6-diaminopimelate ligase of Geobacter metallireducens (strain ATCC 53774 / DSM 7210 / GS-15).